The chain runs to 1070 residues: DNA-directed RNA polymerase subunit beta (1070 aa).

Belongs to the RNA polymerase beta chain family. In terms of assembly, in plastids the minimal PEP RNA polymerase catalytic core is composed of four subunits: alpha, beta, beta', and beta''. When a (nuclear-encoded) sigma factor is associated with the core the holoenzyme is formed, which can initiate transcription.

The protein resides in the plastid. It localises to the chloroplast. The catalysed reaction is RNA(n) + a ribonucleoside 5'-triphosphate = RNA(n+1) + diphosphate. In terms of biological role, DNA-dependent RNA polymerase catalyzes the transcription of DNA into RNA using the four ribonucleoside triphosphates as substrates. The protein is DNA-directed RNA polymerase subunit beta of Gossypium barbadense (Sea Island cotton).